Consider the following 30-residue polypeptide: Cyclotide cter-G (30 aa).

The cyclopeptide (Gly-Asn) cross-link spans 1–30 (GLPCGESCVFIPCITTVVGCSCKNKVCYNN). Disulfide bonds link cysteine 4–cysteine 20, cysteine 8–cysteine 22, and cysteine 13–cysteine 27.

Contains 3 disulfide bonds. In terms of processing, this is a cyclic peptide.

Functionally, probably participates in a plant defense mechanism. The sequence is that of Cyclotide cter-G from Clitoria ternatea (Butterfly pea).